Here is a 269-residue protein sequence, read N- to C-terminus: MRLSVSLLALAFGSLVAAAPNTKPRTCGSKPSMEFLAKSAEFAAKEASGELLNSLATIEVETYFHVVASGRTPSQGYLSDAMLANQLRVMNSDYGPHGIQFNLVRTTRTVNANWARDGDELGMKRALRQGGYNALNVYFLGDLGSLLGYCYFPTNASPGSTAFIRDGCVVVGQSVPGGNISNYNLGKTATHEVGHWFGGCFGSGDGVSDTPPQRSSTQGCPSSRDSCPGGGVDPIHNYMDYSYDVCMNQFTSGQRTRIYNMWNQYRARG.

Residues 1–18 form the signal peptide; the sequence is MRLSVSLLALAFGSLVAA. N-linked (GlcNAc...) asparagine glycosylation occurs at asparagine 179. Histidine 191 is a binding site for Zn(2+). The active site involves glutamate 192. Position 195 (histidine 195) interacts with Zn(2+). The tract at residues 207 to 227 is disordered; sequence VSDTPPQRSSTQGCPSSRDSC. The span at 210 to 225 shows a compositional bias: polar residues; sequence TPPQRSSTQGCPSSRD. A disulfide bond links cysteine 220 and cysteine 246.

This sequence belongs to the peptidase M43B family.

The protein resides in the secreted. In terms of biological role, secreted metalloproteinase that allows assimilation of proteinaceous substrates. The polypeptide is Extracellular metalloprotease UREG_07765 (Uncinocarpus reesii (strain UAMH 1704)).